The primary structure comprises 557 residues: MAAQGFLLIATFLLVLMVLARPLGSGLARLINDIPLPGTAGVERILFRLPGVSDHEMNWKQYLCAILGLNMLGLAVLFFMLLGQHYLPLNPQQLPGLSWDLALNTAVSFVTNTNWQSYSGETTLSYFSQMAGLTVQNFLSAASGIAVIFAFIRAFTRQSMSTLGNAWVDLLRITLWVLVPVALLIALFFIQQGAQQNFLPYQAVNTVEGAQQLLPMGPVASQEAIKMLGTNGGGFFNANSSHPFENPTALTNFVQMLAIFLIPTALCFAFGEVTGDRRQGRMLLWAMSVIFVICVGVVMWAEVQGNPHLLALGADSSINMEGKESRFGVLVSSLFAVVTTAASCGAVIAMHDSFTALGGMVPMWLMQIGEVVFGGVGSGLYGMMLFVLLAVFIAGLMIGRTPEYLGKKIDVREMKLTALAILVTPTLVLMGAALAMMTDAGRSAMLNPSPHGFSEVLYAVSSAANNNGSAFAGLSANSPFWNCLLAFCMFVGRFGVIIPVMAIAGSLVSKKSQPASSGTLPTHGPLFVGLLIGTVLLVGALTFIPALALGPVAEYLS.

12 consecutive transmembrane segments (helical) span residues 5 to 25, 63 to 83, 132 to 152, 170 to 190, 253 to 273, 283 to 303, 329 to 349, 356 to 376, 379 to 399, 416 to 436, 484 to 504, and 526 to 546; these read GFLL…PLGS, LCAI…MLLG, GLTV…FAFI, LLRI…LFFI, FVQM…FGEV, LLWA…WAEV, VLVS…AVIA, ALGG…FGGV, GLYG…LMIG, LTAL…ALAM, LLAF…MAIA, and LFVG…FIPA.

Belongs to the KdpA family. In terms of assembly, the system is composed of three essential subunits: KdpA, KdpB and KdpC.

Its subcellular location is the cell inner membrane. Its function is as follows. Part of the high-affinity ATP-driven potassium transport (or Kdp) system, which catalyzes the hydrolysis of ATP coupled with the electrogenic transport of potassium into the cytoplasm. This subunit binds the periplasmic potassium ions and delivers the ions to the membrane domain of KdpB through an intramembrane tunnel. This Shigella flexneri protein is Potassium-transporting ATPase potassium-binding subunit.